Consider the following 133-residue polypeptide: Small ribosomal subunit protein uS8 (133 aa).

The protein belongs to the universal ribosomal protein uS8 family. In terms of assembly, part of the 30S ribosomal subunit.

One of the primary rRNA binding proteins, it binds directly to 16S rRNA central domain where it helps coordinate assembly of the platform of the 30S subunit. This Ignicoccus hospitalis (strain KIN4/I / DSM 18386 / JCM 14125) protein is Small ribosomal subunit protein uS8.